The sequence spans 561 residues: Lysine--tRNA ligase (561 aa).

2 residues coordinate Mg(2+): Glu-409 and Glu-416.

This sequence belongs to the class-II aminoacyl-tRNA synthetase family. As to quaternary structure, homodimer. Mg(2+) serves as cofactor.

It localises to the cytoplasm. The catalysed reaction is tRNA(Lys) + L-lysine + ATP = L-lysyl-tRNA(Lys) + AMP + diphosphate. The protein is Lysine--tRNA ligase of Nostoc sp. (strain PCC 7120 / SAG 25.82 / UTEX 2576).